Reading from the N-terminus, the 544-residue chain is Chaperonin GroEL 1 (544 aa).

ATP-binding positions include 29–32 (TLGP), 86–90 (DGTTT), Gly413, 479–481 (NAA), and Asp495.

It belongs to the chaperonin (HSP60) family. In terms of assembly, forms a cylinder of 14 subunits composed of two heptameric rings stacked back-to-back. Interacts with the co-chaperonin GroES.

The protein resides in the cytoplasm. It catalyses the reaction ATP + H2O + a folded polypeptide = ADP + phosphate + an unfolded polypeptide.. Its function is as follows. Together with its co-chaperonin GroES, plays an essential role in assisting protein folding. The GroEL-GroES system forms a nano-cage that allows encapsulation of the non-native substrate proteins and provides a physical environment optimized to promote and accelerate protein folding. This chain is Chaperonin GroEL 1, found in Synechococcus sp. (strain CC9902).